We begin with the raw amino-acid sequence, 318 residues long: Aspartate carbamoyltransferase catalytic subunit (318 aa).

Positions 56 and 57 each coordinate carbamoyl phosphate. Lysine 84 is an L-aspartate binding site. Positions 106, 143, and 146 each coordinate carbamoyl phosphate. Positions 176 and 230 each coordinate L-aspartate. Carbamoyl phosphate contacts are provided by glycine 271 and proline 272.

Belongs to the aspartate/ornithine carbamoyltransferase superfamily. ATCase family. Heterododecamer (2C3:3R2) of six catalytic PyrB chains organized as two trimers (C3), and six regulatory PyrI chains organized as three dimers (R2).

It carries out the reaction carbamoyl phosphate + L-aspartate = N-carbamoyl-L-aspartate + phosphate + H(+). It participates in pyrimidine metabolism; UMP biosynthesis via de novo pathway; (S)-dihydroorotate from bicarbonate: step 2/3. Its function is as follows. Catalyzes the condensation of carbamoyl phosphate and aspartate to form carbamoyl aspartate and inorganic phosphate, the committed step in the de novo pyrimidine nucleotide biosynthesis pathway. This is Aspartate carbamoyltransferase catalytic subunit from Mycobacterium avium (strain 104).